We begin with the raw amino-acid sequence, 349 residues long: Tetraacyldisaccharide 4'-kinase (349 aa).

Thr-58–Thr-65 lines the ATP pocket.

This sequence belongs to the LpxK family.

The catalysed reaction is a lipid A disaccharide + ATP = a lipid IVA + ADP + H(+). Its pathway is glycolipid biosynthesis; lipid IV(A) biosynthesis; lipid IV(A) from (3R)-3-hydroxytetradecanoyl-[acyl-carrier-protein] and UDP-N-acetyl-alpha-D-glucosamine: step 6/6. In terms of biological role, transfers the gamma-phosphate of ATP to the 4'-position of a tetraacyldisaccharide 1-phosphate intermediate (termed DS-1-P) to form tetraacyldisaccharide 1,4'-bis-phosphate (lipid IVA). The chain is Tetraacyldisaccharide 4'-kinase from Shewanella amazonensis (strain ATCC BAA-1098 / SB2B).